Reading from the N-terminus, the 127-residue chain is Glycine cleavage system H protein (127 aa).

The region spanning 24–105 (TALVGITDFA…YGSGWMVKMK (82 aa)) is the Lipoyl-binding domain. K65 is subject to N6-lipoyllysine.

The protein belongs to the GcvH family. In terms of assembly, the glycine cleavage system is composed of four proteins: P, T, L and H. Requires (R)-lipoate as cofactor.

Functionally, the glycine cleavage system catalyzes the degradation of glycine. The H protein shuttles the methylamine group of glycine from the P protein to the T protein. In Chlorobium luteolum (strain DSM 273 / BCRC 81028 / 2530) (Pelodictyon luteolum), this protein is Glycine cleavage system H protein.